A 324-amino-acid chain; its full sequence is Phospho-N-acetylmuramoyl-pentapeptide-transferase (324 aa).

10 helical membrane passes run 5–25 (GLLV…PLFI), 52–72 (PTMG…IMAI), 77–97 (LGAE…IGFL), 122–142 (VIAI…YIMI), 149–169 (FELG…GSNA), 176–196 (LDGL…IIAV), 201–221 (FGVA…LVFN), 227–247 (VFMG…VAIL), 253–273 (LLVI…IQVI), and 302–322 (VVVT…YIGV).

It belongs to the glycosyltransferase 4 family. MraY subfamily. Requires Mg(2+) as cofactor.

It is found in the cell membrane. It catalyses the reaction UDP-N-acetyl-alpha-D-muramoyl-L-alanyl-gamma-D-glutamyl-meso-2,6-diaminopimeloyl-D-alanyl-D-alanine + di-trans,octa-cis-undecaprenyl phosphate = di-trans,octa-cis-undecaprenyl diphospho-N-acetyl-alpha-D-muramoyl-L-alanyl-D-glutamyl-meso-2,6-diaminopimeloyl-D-alanyl-D-alanine + UMP. It participates in cell wall biogenesis; peptidoglycan biosynthesis. In terms of biological role, catalyzes the initial step of the lipid cycle reactions in the biosynthesis of the cell wall peptidoglycan: transfers peptidoglycan precursor phospho-MurNAc-pentapeptide from UDP-MurNAc-pentapeptide onto the lipid carrier undecaprenyl phosphate, yielding undecaprenyl-pyrophosphoryl-MurNAc-pentapeptide, known as lipid I. This chain is Phospho-N-acetylmuramoyl-pentapeptide-transferase, found in Bacillus anthracis.